An 80-amino-acid polypeptide reads, in one-letter code: Omega-conotoxin-like PuIA (80 aa).

The signal sequence occupies residues 1-22 (MKLTCVMIVAVLFLTAWTFVTA). The propeptide occupies 23-50 (DSIRALEDLFAKAPDEMENSGASPLNER). 3 disulfides stabilise this stretch: C52–C70, C59–C74, and C69–C78.

This sequence belongs to the conotoxin O1 superfamily. Expressed by the venom duct.

The protein localises to the secreted. Functionally, omega-conotoxins act at presynaptic membranes, they bind and block voltage-gated calcium channels (Cav). This Conus pulicarius (Flea-bitten cone) protein is Omega-conotoxin-like PuIA.